The following is a 423-amino-acid chain: Serine--tRNA ligase (423 aa).

Basic and acidic residues-rich tracts occupy residues 1-24 (MIDL…RGED) and 62-71 (KMRDASPEEK). The interval 1–71 (MIDLKQLRDD…KMRDASPEEK (71 aa)) is disordered. Position 230–232 (230–232 (TSE)) interacts with L-serine. ATP contacts are provided by residues 261–263 (RRE) and Val-277. Glu-284 contributes to the L-serine binding site. An ATP-binding site is contributed by 348–351 (ELTS). Residue Thr-383 coordinates L-serine.

The protein belongs to the class-II aminoacyl-tRNA synthetase family. Type-1 seryl-tRNA synthetase subfamily. As to quaternary structure, homodimer. The tRNA molecule binds across the dimer.

It is found in the cytoplasm. The catalysed reaction is tRNA(Ser) + L-serine + ATP = L-seryl-tRNA(Ser) + AMP + diphosphate + H(+). It catalyses the reaction tRNA(Sec) + L-serine + ATP = L-seryl-tRNA(Sec) + AMP + diphosphate + H(+). It participates in aminoacyl-tRNA biosynthesis; selenocysteinyl-tRNA(Sec) biosynthesis; L-seryl-tRNA(Sec) from L-serine and tRNA(Sec): step 1/1. Catalyzes the attachment of serine to tRNA(Ser). Is also able to aminoacylate tRNA(Sec) with serine, to form the misacylated tRNA L-seryl-tRNA(Sec), which will be further converted into selenocysteinyl-tRNA(Sec). The polypeptide is Serine--tRNA ligase (Corynebacterium kroppenstedtii (strain DSM 44385 / JCM 11950 / CIP 105744 / CCUG 35717)).